A 131-amino-acid polypeptide reads, in one-letter code: Sulfurtransferase TusD (131 aa).

The active-site Cysteine persulfide intermediate is Cys81.

The protein belongs to the DsrE/TusD family. In terms of assembly, heterohexamer, formed by a dimer of trimers. The hexameric TusBCD complex contains 2 copies each of TusB, TusC and TusD. The TusBCD complex interacts with TusE.

The protein localises to the cytoplasm. Functionally, part of a sulfur-relay system required for 2-thiolation of 5-methylaminomethyl-2-thiouridine (mnm(5)s(2)U) at tRNA wobble positions. Accepts sulfur from TusA and transfers it in turn to TusE. The sequence is that of Sulfurtransferase TusD from Yersinia pseudotuberculosis serotype O:1b (strain IP 31758).